The following is a 578-amino-acid chain: L-ascorbate oxidase (578 aa).

Residues 1-28 form the signal peptide; it reads MASLGFLFFFLLPLILLELSSSRSVMAA. Plastocyanin-like domains lie at 30–149 and 161–328; these read TRHF…LIVE and DGEF…NYLP. 4 residues coordinate Cu cation: His-87, His-89, His-131, and His-133. 2 cysteine pairs are disulfide-bonded: Cys-108/Cys-565 and Cys-207/Cys-221. Asn-206 carries an N-linked (GlcNAc...) asparagine glycan. Residues Asn-349, Asn-394, Asn-438, and Asn-451 are each glycosylated (N-linked (GlcNAc...) asparagine). The 179-residue stretch at 372 to 550 folds into the Plastocyanin-like 3 domain; that stretch reads HRRIILLNTQ…HMGMGVIFAE (179 aa). Residues His-472, His-475, His-477, His-533, Cys-534, His-535, His-539, and Met-544 each contribute to the Cu cation site.

Belongs to the multicopper oxidase family. Dimer. Cu cation serves as cofactor. As to expression, highly expressed in young and growing tissues.

Its subcellular location is the secreted. The catalysed reaction is 4 L-ascorbate + O2 = 4 monodehydro-L-ascorbate radical + 2 H2O. Functionally, may be involved in a redox system involving ascorbic acid. The protein is L-ascorbate oxidase (AAO) of Nicotiana tabacum (Common tobacco).